The sequence spans 316 residues: Probable porphobilinogen deaminase (316 aa).

S-(dipyrrolylmethanemethyl)cysteine is present on cysteine 234.

The protein belongs to the HMBS family. The cofactor is dipyrromethane.

The enzyme catalyses 4 porphobilinogen + H2O = hydroxymethylbilane + 4 NH4(+). It functions in the pathway porphyrin-containing compound metabolism; protoporphyrin-IX biosynthesis; coproporphyrinogen-III from 5-aminolevulinate: step 2/4. Its function is as follows. Tetrapolymerization of the monopyrrole PBG into the hydroxymethylbilane pre-uroporphyrinogen in several discrete steps. The polypeptide is Probable porphobilinogen deaminase (Methanosarcina mazei (strain ATCC BAA-159 / DSM 3647 / Goe1 / Go1 / JCM 11833 / OCM 88) (Methanosarcina frisia)).